Consider the following 349-residue polypeptide: Thioredoxin-related transmembrane protein 4 (349 aa).

Positions 1 to 23 (MAGGRCGPQLTALLAAWIAAVAA) are cleaved as a signal peptide. The 108-residue stretch at 30 to 137 (AALPPEQSRV…FEDLQNYILE (108 aa)) folds into the Thioredoxin domain. Residues Cys-64 and Cys-67 each act as nucleophile in the active site. Residues Cys-64 and Cys-67 are joined by a disulfide bond. The helical transmembrane segment at 190-210 (VFFVIATLVFGLFMGLVLVVI) threads the bilayer. Basic and acidic residues predominate over residues 225-240 (RSEQNRRSEEAHRAEQ). The segment at 225-349 (RSEQNRRSEE…RKSQHADKGL (125 aa)) is disordered. Composition is skewed to acidic residues over residues 242 to 284 (QDAE…EEDN) and 312 to 321 (VEPEEAEEGI). Phosphoserine is present on residues Ser-251 and Ser-259. Positions 335–349 (DSLRQRKSQHADKGL) are enriched in basic and acidic residues.

The protein localises to the nucleus inner membrane. It localises to the endoplasmic reticulum membrane. This chain is Thioredoxin-related transmembrane protein 4 (TMX4), found in Homo sapiens (Human).